The chain runs to 271 residues: Glutamate racemase (271 aa).

Residues 10–11 (DS) and 42–43 (YG) each bind substrate. Cysteine 73 (proton donor/acceptor) is an active-site residue. Residue 74 to 75 (NT) participates in substrate binding. Catalysis depends on cysteine 183, which acts as the Proton donor/acceptor. 184–185 (TH) serves as a coordination point for substrate.

This sequence belongs to the aspartate/glutamate racemases family.

It carries out the reaction L-glutamate = D-glutamate. Its pathway is cell wall biogenesis; peptidoglycan biosynthesis. Provides the (R)-glutamate required for cell wall biosynthesis. This is Glutamate racemase from Streptococcus thermophilus (strain ATCC BAA-250 / LMG 18311).